A 346-amino-acid polypeptide reads, in one-letter code: Holliday junction branch migration complex subunit RuvB (346 aa).

Residues Met1 to Tyr182 are large ATPase domain (RuvB-L). ATP contacts are provided by residues Leu21, Arg22, Gly63, Lys66, Thr67, Thr68, Glu129–Tyr131, Arg172, Tyr182, and Arg219. Mg(2+) is bound at residue Thr67. The interval Thr183 to Leu253 is small ATPAse domain (RuvB-S). The segment at Asn256–Asp346 is head domain (RuvB-H). Residues Arg292, Arg311, and Arg316 each coordinate DNA.

This sequence belongs to the RuvB family. In terms of assembly, homohexamer. Forms an RuvA(8)-RuvB(12)-Holliday junction (HJ) complex. HJ DNA is sandwiched between 2 RuvA tetramers; dsDNA enters through RuvA and exits via RuvB. An RuvB hexamer assembles on each DNA strand where it exits the tetramer. Each RuvB hexamer is contacted by two RuvA subunits (via domain III) on 2 adjacent RuvB subunits; this complex drives branch migration. In the full resolvosome a probable DNA-RuvA(4)-RuvB(12)-RuvC(2) complex forms which resolves the HJ.

The protein localises to the cytoplasm. It carries out the reaction ATP + H2O = ADP + phosphate + H(+). The RuvA-RuvB-RuvC complex processes Holliday junction (HJ) DNA during genetic recombination and DNA repair, while the RuvA-RuvB complex plays an important role in the rescue of blocked DNA replication forks via replication fork reversal (RFR). RuvA specifically binds to HJ cruciform DNA, conferring on it an open structure. The RuvB hexamer acts as an ATP-dependent pump, pulling dsDNA into and through the RuvAB complex. RuvB forms 2 homohexamers on either side of HJ DNA bound by 1 or 2 RuvA tetramers; 4 subunits per hexamer contact DNA at a time. Coordinated motions by a converter formed by DNA-disengaged RuvB subunits stimulates ATP hydrolysis and nucleotide exchange. Immobilization of the converter enables RuvB to convert the ATP-contained energy into a lever motion, pulling 2 nucleotides of DNA out of the RuvA tetramer per ATP hydrolyzed, thus driving DNA branch migration. The RuvB motors rotate together with the DNA substrate, which together with the progressing nucleotide cycle form the mechanistic basis for DNA recombination by continuous HJ branch migration. Branch migration allows RuvC to scan DNA until it finds its consensus sequence, where it cleaves and resolves cruciform DNA. The chain is Holliday junction branch migration complex subunit RuvB from Rhizobium etli (strain ATCC 51251 / DSM 11541 / JCM 21823 / NBRC 15573 / CFN 42).